The sequence spans 708 residues: Outer capsid protein mu-1 (708 aa).

Gly2 carries N-myristoyl glycine; by host lipidation. Residues Asn3, Asn12, Asn81, Asn110, Asn458, Asn482, Asn528, and Asn659 are each glycosylated (N-linked (GlcNAc...) asparagine; by host). Residues 675–708 form a disordered region; it reads PKPDCPTSGDSGESSNRRVKRDSYAGVVKRGYTR.

It belongs to the orthoreovirus mu-1 protein family. Heterohexamer of three sigma-3 and three Mu-1 proteins. Cleaved during the endosomal proteolytic disassembly of the outer capsid. Mu-1 is proteolytically cleaved into mu-1N and mu-1C during the maturation step to generate the ISVP. Cleavage of mu-1 to mu-1C is dependent on myristoylation and binding to sigma-3 protein. Mu-1C is further cleaved into delta (59 kDa), and phi (13 kDa) segments during entry into the host cell cytoplasm. In terms of processing, mu-1 and mu-1N are N-terminally myristoylated. This acylation is essential for the membrane fusion activity.

Its subcellular location is the virion. It localises to the host cell membrane. The protein resides in the host endoplasmic reticulum. The protein localises to the host mitochondrion. Functionally, major outer capsid protein involved in host cell membrane penetration. In the endocytic compartment, outer-capsid protein sigma-3 is removed by cathepsin proteases, which exposes the viral membrane-penetration protein mu-1. Both myristoylated peptides mu-1N and phi are released during infectious subvirion particles (ISVP) formation in the endosome. They associate with host membranes and mu-1N induces permeabilization and delivery of transcriptionally active viral particles into the host cell cytoplasm. Seems to induce apoptosis in the host cell. The viral outer shell polypeptides, of which mu-1 is one, impose structural constraints that prevent elongation of nascent transcripts by the RNA-dependent RNA polymerase lambda-3. In Mammalia (T3D), this protein is Outer capsid protein mu-1 (M2).